We begin with the raw amino-acid sequence, 405 residues long: L-carnitine CoA-transferase (405 aa).

The CoA site is built by K97 and R104. The Nucleophile role is filled by D169.

Belongs to the CoA-transferase III family. CaiB subfamily. In terms of assembly, homodimer.

It localises to the cytoplasm. It catalyses the reaction crotonobetainyl-CoA + (R)-carnitine = crotonobetaine + (R)-carnitinyl-CoA. The catalysed reaction is 4-(trimethylamino)butanoyl-CoA + (R)-carnitine = (R)-carnitinyl-CoA + 4-(trimethylamino)butanoate. The protein operates within amine and polyamine metabolism; carnitine metabolism. Its function is as follows. Catalyzes the reversible transfer of the CoA moiety from gamma-butyrobetainyl-CoA to L-carnitine to generate L-carnitinyl-CoA and gamma-butyrobetaine. Is also able to catalyze the reversible transfer of the CoA moiety from gamma-butyrobetainyl-CoA or L-carnitinyl-CoA to crotonobetaine to generate crotonobetainyl-CoA. This is L-carnitine CoA-transferase from Salmonella gallinarum (strain 287/91 / NCTC 13346).